A 128-amino-acid polypeptide reads, in one-letter code: Light-regulated protein, chloroplastic (128 aa).

2 consecutive repeat copies span residues 58–72 (VFPM…GEAC) and 111–125 (VFPE…GEFC). Residues 58–125 (VFPMEACDLI…ACDDLGGEFC (68 aa)) form a 2 X 15 AA approximate repeats region.

Component of high molecular weight thylakoid LFNRs-containing protein complexes containing LIR1, LFNR1, LFNR2, TIC62 and TROL proteins. Interacts directly with LFNR1 and LFNR2; LIR1 increases the affinity of LFNR1 and LFNR2 for TIC62 and subsequent thylakoid relocalization. Post-translationally, may form interchain disulfide bonds with LFNR1 and LFNR2.

It is found in the plastid. The protein resides in the chloroplast thylakoid membrane. It localises to the chloroplast envelope. Its subcellular location is the chloroplast stroma. Its function is as follows. Thylakoid-determinant subunit of high molecular weight LFNRs-containing protein complexes. This is Light-regulated protein, chloroplastic (LIR1) from Oryza sativa subsp. japonica (Rice).